We begin with the raw amino-acid sequence, 241 residues long: Ribose-5-phosphate isomerase A (241 aa).

Residues 28–31 (TGST), 83–86 (DGAD), and 96–99 (KGGG) each bind substrate. The Proton acceptor role is filled by glutamate 105. Substrate is bound at residue lysine 123.

The protein belongs to the ribose 5-phosphate isomerase family. As to quaternary structure, homodimer.

The enzyme catalyses aldehydo-D-ribose 5-phosphate = D-ribulose 5-phosphate. It participates in carbohydrate degradation; pentose phosphate pathway; D-ribose 5-phosphate from D-ribulose 5-phosphate (non-oxidative stage): step 1/1. Its function is as follows. Catalyzes the reversible conversion of ribose-5-phosphate to ribulose 5-phosphate. The polypeptide is Ribose-5-phosphate isomerase A (Bradyrhizobium diazoefficiens (strain JCM 10833 / BCRC 13528 / IAM 13628 / NBRC 14792 / USDA 110)).